A 56-amino-acid chain; its full sequence is Ovomucoid (56 aa).

Positions 6–56 constitute a Kazal-like domain; it reads VDCSEYPKPACTLEYVPICGSDNKTYGNKCNFCNAVVESNGTLTLSHFGKC. 3 disulfide bridges follow: Cys8-Cys38, Cys16-Cys35, and Cys24-Cys56. Asn45 carries an N-linked (GlcNAc...) asparagine glycan.

The protein localises to the secreted. The chain is Ovomucoid from Cyrtonyx montezumae (Montezuma quail).